We begin with the raw amino-acid sequence, 751 residues long: Zinc finger protein 337 (751 aa).

In terms of domain architecture, KRAB spans 12-83 (LAFGDVTVDF…ERRRRPGPCA (72 aa)). The span at 101-116 (QRQQQLQFSDQSFQSD) shows a compositional bias: low complexity. Positions 101–163 (QRQQQLQFSD…SSQGQRENPT (63 aa)) are disordered. The C2H2-type 1; degenerate zinc finger occupies 180–202 (FKCAERGQDFSRKMMVIIHKKAH). C2H2-type zinc fingers lie at residues 208–230 (FTCR…QNTH), 236–258 (YVCS…QRTH), 264–286 (FLCK…ERTH), 292–314 (YECQ…LKAH), 320–342 (FVCK…KRIH), 348–370 (YRCQ…QRTH), 376–398 (FACR…QRTH), 404–426 (FVCK…QRTH), and 432–454 (FVCR…QITH). Lys458 participates in a covalent cross-link: Glycyl lysine isopeptide (Lys-Gly) (interchain with G-Cter in SUMO2). 10 consecutive C2H2-type zinc fingers follow at residues 460–482 (FVCK…QRTH), 488–510 (YGCR…LRAH), 516–538 (FFCR…QRTH), 544–566 (FMCK…QWTH), 572–594 (FNCK…QKTH), 600–622 (FICS…QLAH), 628–650 (FVCK…QRTH), 656–679 (FVCN…WRIH), 685–707 (FVCQ…ERIH), and 713–735 (YECQ…LKRH).

The protein belongs to the krueppel C2H2-type zinc-finger protein family.

The protein localises to the nucleus. In terms of biological role, may be involved in transcriptional regulation. The chain is Zinc finger protein 337 (ZNF337) from Homo sapiens (Human).